Consider the following 234-residue polypeptide: Carboxy-S-adenosyl-L-methionine synthase (234 aa).

S-adenosyl-L-methionine contacts are provided by residues Tyr-35, 60–62, 109–110, Asn-124, and Arg-191; these read GCS and DV.

Belongs to the class I-like SAM-binding methyltransferase superfamily. Cx-SAM synthase family. As to quaternary structure, homodimer.

The enzyme catalyses prephenate + S-adenosyl-L-methionine = carboxy-S-adenosyl-L-methionine + 3-phenylpyruvate + H2O. Functionally, catalyzes the conversion of S-adenosyl-L-methionine (SAM) to carboxy-S-adenosyl-L-methionine (Cx-SAM). The polypeptide is Carboxy-S-adenosyl-L-methionine synthase (Campylobacter curvus (strain 525.92)).